The sequence spans 569 residues: Proline--tRNA ligase (569 aa).

It belongs to the class-II aminoacyl-tRNA synthetase family. ProS type 1 subfamily. As to quaternary structure, homodimer.

The protein resides in the cytoplasm. It carries out the reaction tRNA(Pro) + L-proline + ATP = L-prolyl-tRNA(Pro) + AMP + diphosphate. Catalyzes the attachment of proline to tRNA(Pro) in a two-step reaction: proline is first activated by ATP to form Pro-AMP and then transferred to the acceptor end of tRNA(Pro). As ProRS can inadvertently accommodate and process non-cognate amino acids such as alanine and cysteine, to avoid such errors it has two additional distinct editing activities against alanine. One activity is designated as 'pretransfer' editing and involves the tRNA(Pro)-independent hydrolysis of activated Ala-AMP. The other activity is designated 'posttransfer' editing and involves deacylation of mischarged Ala-tRNA(Pro). The misacylated Cys-tRNA(Pro) is not edited by ProRS. The chain is Proline--tRNA ligase from Lactiplantibacillus plantarum (strain ATCC BAA-793 / NCIMB 8826 / WCFS1) (Lactobacillus plantarum).